A 72-amino-acid polypeptide reads, in one-letter code: uncharacterized protein (72 aa).

Residues 15–62 (NNNYNNNNNNNNNNNNNNNNNNNNNNNNNNININNNNNNNNNNNNNNN) are disordered.

This is an uncharacterized protein from Dictyostelium discoideum (Social amoeba).